The sequence spans 179 residues: MTVSTERAVLAGGCFWGMQALLRRYPGVISTRVGYTGGDVPDATYRNHGDHAEAIEVNFDPTVTSYRQLLEFFFQIHDPTTEDRQGYDQGLSYRSAIFYTNEEQKRIAEETIAEIDASGLWPGYVVTDVEPAGPFWEAEPEHQDYLERVPNGYTCHFVRPNWKLPRKQDAGQTAAGGDR.

Cysteine 14 is a catalytic residue.

This sequence belongs to the MsrA Met sulfoxide reductase family.

It catalyses the reaction L-methionyl-[protein] + [thioredoxin]-disulfide + H2O = L-methionyl-(S)-S-oxide-[protein] + [thioredoxin]-dithiol. The enzyme catalyses [thioredoxin]-disulfide + L-methionine + H2O = L-methionine (S)-S-oxide + [thioredoxin]-dithiol. Functionally, has an important function as a repair enzyme for proteins that have been inactivated by oxidation. Catalyzes the reversible oxidation-reduction of methionine sulfoxide in proteins to methionine. This chain is Peptide methionine sulfoxide reductase MsrA, found in Nitrobacter winogradskyi (strain ATCC 25391 / DSM 10237 / CIP 104748 / NCIMB 11846 / Nb-255).